The sequence spans 80 residues: FXYD domain-containing ion transport regulator 7 (80 aa).

The Extracellular segment spans residues 1–23 (MATPTQTPTKAPEEPDPFYYDYN). O-linked (GlcNAc) threonine glycans are attached at residues Thr3, Thr5, and Thr9. Residues 24 to 46 (TVQTVGMTLATILFLLGILIVIS) form a helical membrane-spanning segment. Topologically, residues 47 to 80 (KKVKCRKADSRSESPTCKSCKSELPSSAPGGGGV) are cytoplasmic. A disordered region spans residues 54-80 (ADSRSESPTCKSCKSELPSSAPGGGGV). Ser73 carries the post-translational modification Phosphoserine.

This sequence belongs to the FXYD family. Regulatory subunit of the sodium/potassium-transporting ATPase which is composed of a catalytic alpha subunit, a non-catalytic beta subunit and a FXYD regulatory unit that modulates the enzymatic activity in a tissue- and isoform-specific way by changing affinities of the Na+/K+-ATPase toward Na(+), K(+) or ATP. Post-translationally, O-glycosylated; required for stabilization and translocation to the plasma membrane.

It is found in the cell membrane. In terms of biological role, associates with and regulates the activity of the sodium/potassium-transporting ATPase (NKA) which catalyzes the hydrolysis of ATP coupled with the exchange of Na(+) and K(+) ions across the plasma membrane. Reduces the apparent affinity for external K(+), an effect that depends on the presence of external Na(+) and voltage. Increases the apparent affinity for intracellular Na(+). This is FXYD domain-containing ion transport regulator 7 (FXYD7) from Homo sapiens (Human).